The chain runs to 156 residues: Flagellar assembly factor FliW (156 aa).

This sequence belongs to the FliW family. As to quaternary structure, interacts with translational regulator CsrA and flagellin(s).

Its subcellular location is the cytoplasm. In terms of biological role, acts as an anti-CsrA protein, binds CsrA and prevents it from repressing translation of its target genes, one of which is flagellin. Binds to flagellin and participates in the assembly of the flagellum. The polypeptide is Flagellar assembly factor FliW (Syntrophomonas wolfei subsp. wolfei (strain DSM 2245B / Goettingen)).